Reading from the N-terminus, the 469-residue chain is Protein RUFY3 (469 aa).

Residues Thr-5 and Thr-12 each carry the phosphothreonine modification. A phosphoserine mark is found at Ser-34 and Ser-49. Position 51 is a phosphothreonine (Thr-51). In terms of domain architecture, RUN spans 95–227; the sequence is DSDYAPLQQF…IDANFCMKGE (133 aa). Coiled coils occupy residues 271-362 and 422-463; these read NRHL…VEKE and KSEL…AANK.

Interacts with PAK1. Interacts (via C-terminus) with Ras-related Rab-5 proteins. Interacts (via C-terminus) with Ras-related Rap-2 proteins. Interacts with PIK3CA and PIK3R1. Interacts (via N-terminus) with FSCN1; this interaction induces neuron axon development. Interacts with DBN1. Interacts (via the second coiled coil) with GTP-, but not GDP-bound ARL8A and ARL8B. Interacts with dynactin/DCTN1 and the dynein intermediate chain DYNC1I1/2. Directly interacts with DYNC1LI1. Post-translationally, isoform 1 is partially phosphorylated. Phosphorylated by PAK1. Expressed in brain (at protein level).

Its subcellular location is the cytoplasm. It localises to the endomembrane system. The protein resides in the cell projection. The protein localises to the invadopodium. It is found in the growth cone. Its subcellular location is the perikaryon. It localises to the filopodium. The protein resides in the lamellipodium. The protein localises to the lysosome. In terms of biological role, ARL8 effector that promotes the coupling of endolysosomes to dynein-dynactin for retrograde transport along microtubules. Acts by binding both GTP-bound ARL8 and dynein-dynactin. In nonneuronal cells, promotes concentration of endolysosomes in the juxtanuclear area. In hippocampal neurons, drives retrograde transport of endolysosomes from the axon to the soma. Plays a role in the generation of neuronal polarity formation and axon growth. Implicated in the formation of a single axon by developing neurons. May inhibit the formation of additional axons by inhibition of PI3K in minor neuronal processes. Plays a role in the formation of F-actin-enriched protrusive structures at the cell periphery. Plays a role in cytoskeletal organization by regulating the subcellular localization of FSCN1 and DBN1 at axonal growth cones. The polypeptide is Protein RUFY3 (Rattus norvegicus (Rat)).